The primary structure comprises 247 residues: tRNA pseudouridine synthase A (247 aa).

Catalysis depends on aspartate 52, which acts as the Nucleophile. Tyrosine 113 contributes to the substrate binding site.

It belongs to the tRNA pseudouridine synthase TruA family. In terms of assembly, homodimer.

It carries out the reaction uridine(38/39/40) in tRNA = pseudouridine(38/39/40) in tRNA. Formation of pseudouridine at positions 38, 39 and 40 in the anticodon stem and loop of transfer RNAs. The chain is tRNA pseudouridine synthase A from Bartonella bacilliformis (strain ATCC 35685 / KC583 / Herrer 020/F12,63).